A 498-amino-acid chain; its full sequence is Probable malate:quinone oxidoreductase (498 aa).

This sequence belongs to the MQO family. The cofactor is FAD.

The enzyme catalyses (S)-malate + a quinone = a quinol + oxaloacetate. The protein operates within carbohydrate metabolism; tricarboxylic acid cycle; oxaloacetate from (S)-malate (quinone route): step 1/1. The polypeptide is Probable malate:quinone oxidoreductase (Prochlorococcus marinus (strain MIT 9301)).